The primary structure comprises 57 residues: uncharacterized protein (57 aa).

This is an uncharacterized protein from Escherichia coli.